The primary structure comprises 197 residues: Recombination protein RecR (197 aa).

Residues 56–71 (CPVCGTLDTRAPCSIC) form a C4-type zinc finger. The region spanning 79-174 (TLICVVRDVA…TVSGLAQGVP (96 aa)) is the Toprim domain.

The protein belongs to the RecR family.

Its function is as follows. May play a role in DNA repair. It seems to be involved in an RecBC-independent recombinational process of DNA repair. It may act with RecF and RecO. The chain is Recombination protein RecR from Rhodospirillum rubrum (strain ATCC 11170 / ATH 1.1.1 / DSM 467 / LMG 4362 / NCIMB 8255 / S1).